Consider the following 1020-residue polypeptide: Mastermind-like protein 1 (1020 aa).

A required for interaction with NOTCH proteins region spans residues 1–97; the sequence is MVLPTCPMAE…PAPASAPAAA (97 aa). A Phosphoserine modification is found at Ser45. Over residues 67 to 76 the composition is skewed to basic residues; sequence KAKRAGKHRQ. The segment at 67 to 191 is disordered; the sequence is KAKRAGKHRQ…TAGKHSLGLD (125 aa). The span at 77-99 shows a compositional bias: low complexity; sequence PPAAATAPVAAPAPASAPAAARL. Residues 100–122 show a composition bias toward basic and acidic residues; that stretch reads DAADGPEHGRPVAHLHDTVKRSL. Residues 124-133 are compositionally biased toward polar residues; it reads SAASPQNGDQ. A phosphoserine mark is found at Ser127, Ser310, Ser321, and Ser367. Disordered regions lie at residues 335–522, 575–598, 663–686, 725–748, 794–866, and 888–959; these read GASS…YGNT, PFRS…APAA, EKQQ…QSTF, SMGP…RGVA, QNAS…NPFT, and AMPS…RPGL. Residues 344 to 369 are compositionally biased toward polar residues; the sequence is DSPSLGSSQTLFHTTSQPGVDNSSPN. The span at 373 to 383 shows a compositional bias: low complexity; sequence ASAQAQSAQRA. A compositionally biased stretch (polar residues) spans 399-410; that stretch reads ELSSAHQLQQIA. Residues 419–435 show a composition bias toward low complexity; sequence LQNPQQAAPAPGPGQLA. Residues 491–515 show a composition bias toward polar residues; the sequence is PSHSNLLSHQSPSNLNQNPVNNQGS. The span at 588–598 shows a compositional bias: low complexity; it reads PSSVPVAAPAA. A compositionally biased stretch (polar residues) spans 794–818; that stretch reads QNASTSAAYGQNSLGSASLSQQHSK. Position 827 is an N6-acetyllysine (Lys827). A compositionally biased stretch (polar residues) spans 837–864; sequence MGSQNASWQHQGMPNLSSQTSGNSSVNP. Positions 911-920 are enriched in low complexity; the sequence is SAQQRNSAPA. Ser1019 carries the phosphoserine modification.

This sequence belongs to the mastermind family. Interacts (via N-terminus) with NOTCH1, NOTCH2, NOTCH3 and NOTCH4 (via ankyrin repeat region). Interacts (via N-terminus) with p53 (via DNA-binding region). Forms a DNA-binding complex with Notch proteins and RBPSUH/RBP-J kappa/CBF1. Also binds CREBBP/CBP and CDK8. Forms a complex with PRAG1, NOTCH1 and MAML1, in a MAML1-dependent manner. As to expression, at E9.5, strongly expressed in the telencephalon, first branchial arch, forelimb buds and somites. By 10.5 dpc, continuously expressed in brain and spinal cord. Also expressed in first and second branchial arches and limb buds. By 11.5 dpc, expression in CNS is weak but increases in mesodermal tissues. At 14.5 dpc, detected in epithelial cells in trachea, esophagus and proximal and distal tubules of the developing lungs.

Its subcellular location is the nucleus speckle. In terms of biological role, acts as a transcriptional coactivator for NOTCH proteins. Has been shown to amplify NOTCH-induced transcription of HES1. Enhances phosphorylation and proteolytic turnover of the NOTCH intracellular domain in the nucleus through interaction with CDK8. Binds to CREBBP/CBP which promotes nucleosome acetylation at NOTCH enhancers and activates transcription. Induces phosphorylation and localization of CREBBP to nuclear foci. Plays a role in hematopoietic development by regulating NOTCH-mediated lymphoid cell fate decisions. This chain is Mastermind-like protein 1, found in Mus musculus (Mouse).